The following is a 444-amino-acid chain: ATP-dependent protease ATPase subunit HslU (444 aa).

ATP contacts are provided by residues isoleucine 18 and 60–65 (GVGKTE). The tract at residues 143–163 (WGEVESHDSHSSTRQAFRKKL) is disordered. 3 residues coordinate ATP: aspartate 257, glutamate 322, and arginine 394.

The protein belongs to the ClpX chaperone family. HslU subfamily. In terms of assembly, a double ring-shaped homohexamer of HslV is capped on each side by a ring-shaped HslU homohexamer. The assembly of the HslU/HslV complex is dependent on binding of ATP.

It is found in the cytoplasm. ATPase subunit of a proteasome-like degradation complex; this subunit has chaperone activity. The binding of ATP and its subsequent hydrolysis by HslU are essential for unfolding of protein substrates subsequently hydrolyzed by HslV. HslU recognizes the N-terminal part of its protein substrates and unfolds these before they are guided to HslV for hydrolysis. This is ATP-dependent protease ATPase subunit HslU from Haemophilus influenzae (strain PittEE).